The following is a 953-amino-acid chain: MEEQGHSEMEIIPSESHPHIQLLKSNRELLVTHIRNTQCLVDNLLKNDYFSAEDAEIVCACPTQPDKVRKILDLVQSKGEEVSEFFLYLLQQLADAYVDLRPWLLEIGFSPSLLTQSKVVVNTDPVSRYTQQLRHHLGRDSKFVLCYAQKEELLLEEIYMDTIMELVGFSNESLGSLNSLACLLDHTTGILNEQGETIFILGDAGVGKSMLLQRLQSLWATGRLDAGVKFFFHFRCRMFSCFKESDRLCLQDLLFKHYCYPERDPEEVFAFLLRFPHVALFTFDGLDELHSDLDLSRVPDSSCPWEPAHPLVLLANLLSGKLLKGASKLLTARTGIEVPRQFLRKKVLLRGFSPSHLRAYARRMFPERALQDRLLSQLEANPNLCSLCSVPLFCWIIFRCFQHFRAAFEGSPQLPDCTMTLTDVFLLVTEVHLNRMQPSSLVQRNTRSPVETLHAGRDTLCSLGQVAHRGMEKSLFVFTQEEVQASGLQERDMQLGFLRALPELGPGGDQQSYEFFHLTLQAFFTAFFLVLDDRVGTQELLRFFQEWMPPAGAATTSCYPPFLPFQCLQGSGPAREDLFKNKDHFQFTNLFLCGLLSKAKQKLLRHLVPAAALRRKRKALWAHLFSSLRGYLKSLPRVQVESFNQVQAMPTFIWMLRCIYETQSQKVGQLAARGICANYLKLTYCNACSADCSALSFVLHHFPKRLALDLDNNNLNDYGVRELQPCFSRLTVLRLSVNQITDGGVKVLSEELTKYKIVTYLGLYNNQITDVGARYVTKILDECKGLTHLKLGKNKITSEGGKYLALAVKNSKSISEVGMWGNQVGDEGAKAFAEALRNHPSLTTLSLASNGISTEGGKSLARALQQNTSLEILWLTQNELNDEVAESLAEMLKVNQTLKHLWLIQNQITAKGTAQLADALQSNTGITEICLNGNLIKPEEAKVYEDEKRIICF.

Positions glutamate 15–leucine 105 constitute a CARD domain. An NACHT domain is found at glutamate 196 to leucine 531. ATP is bound at residue glycine 202 to serine 209. 2 S-palmitoyl cysteine lipidation sites follow: cysteine 558 and cysteine 567. 9 LRR repeats span residues leucine 632–leucine 656, phenylalanine 702–proline 725, phenylalanine 727–glutamate 750, tyrosine 755–lysine 778, cysteine 783–leucine 806, histidine 839–arginine 862, asparagine 867–methionine 891, asparagine 895–aspartate 918, and asparagine 923–aspartate 946. Residue cysteine 952 is the site of S-palmitoyl cysteine attachment.

The protein belongs to the NOD1-NOD2 family. As to quaternary structure, homooligomer: homooligomerizes following ligand-binding, promoting RIPK2 recruitment. Interacts (via CARD domain) with RIPK2 (via CARD domain). Following RIPK2 recruitment, RIPK2 homooligomerizes via its CARD domain and forms long filaments named RIPosomes. Interacts with ARHGEF2. Interacts (via CARD domain) with ubiquitin; inhibiting interaction with RIPK2. Interacts with NLRP10 and recruits it to the cell membrane following invasive bacterial infection. Interacts with IFIH1; this interaction promotes transcription of antiviral genes and inhibition of viral replication. Interacts with IRGM; promoting NOD1 degradation. Interacts with ATG16L1. Post-translationally, palmitoylated. Palmitoylation is required for proper recruitment to the bacterial entry site and hence for proper signaling upon cognate peptidoglycan detection. Ubiquitinated. 'Lys-48'-linked polyubiquitination by RNF34 promotes proteasomal degradation and thereby negatively regulates NOD1 for instance in NF-kappa-B activation. In terms of processing, degraded via selective autophagy following interaction with IRGM. IRGM promotes NOD1-RIPK2 RIPosome recruitment to autophagosome membranes, promoting their SQSTM1/p62-dependent autophagic degradation. In terms of tissue distribution, highly expressed in adult heart, skeletal muscle, pancreas, spleen and ovary. Also detected in placenta, lung, liver, kidney, thymus, testis, small intestine and colon.

The protein resides in the cell membrane. It localises to the apical cell membrane. Its subcellular location is the basolateral cell membrane. It is found in the cytoplasm. Pattern recognition receptor (PRR) that detects bacterial peptidoglycan fragments and other danger signals and thus participates in both innate and adaptive immune responses. Specifically recognizes and binds gamma-D-glutamyl-meso-diaminopimelic acid (iE-DAP), a dipeptide present in peptidoglycan of Gram-negative bacteria. Preferentially binds iE-DAP in tripeptide-containing muropeptides (MurNAc-TriDAP or TriDAP). Ligand binding triggers oligomerization that facilitates the binding and subsequent activation of the proximal adapter receptor-interacting RIPK2. Following recruitment, RIPK2 undergoes 'Met-1'- (linear) and 'Lys-63'-linked polyubiquitination by E3 ubiquitin-protein ligases XIAP, BIRC2, BIRC3 and the LUBAC complex, becoming a scaffolding protein for downstream effectors, triggering activation of the NF-kappa-B and MAP kinases signaling. This in turn leads to the transcriptional activation of hundreds of genes involved in immune response. Also acts as a regulator of antiviral response elicited by dsRNA and the expression of RLR pathway members by targeting IFIH1 and TRAF3 to modulate the formation of IFIH1-MAVS and TRAF3-MAVS complexes leading to increased transcription of type I IFNs. Also acts as a regulator of autophagy via its interaction with ATG16L1, possibly by recruiting ATG16L1 at the site of bacterial entry. Besides recognizing pathogens, also involved in the endoplasmic reticulum stress response: acts by sensing and binding to the cytosolic metabolite sphingosine-1-phosphate generated in response to endoplasmic reticulum stress, initiating an inflammation process that leads to activation of the NF-kappa-B and MAP kinases signaling. In addition, plays a role in insulin trafficking in beta cells in a cell-autonomous manner. Mechanistically, upon recognizing cognate ligands, NOD1 and RIPK2 localize to insulin vesicles where they recruit RAB1A to direct insulin trafficking through the cytoplasm. In terms of biological role, in contrast to isoform 1, does not efficiently recognize and bind gamma-D-glutamyl-meso-diaminopimelic acid (iE-DAP) ligand. The chain is Nucleotide-binding oligomerization domain-containing protein 1 from Homo sapiens (Human).